Reading from the N-terminus, the 84-residue chain is Kunitz-type serine protease inhibitor B6 (84 aa).

A signal peptide spans 1–24; it reads MSSGGLLLLLGLLTLWAELTPISS. Residues 31–81 enclose the BPTI/Kunitz inhibitor domain; it reads CNLAPESGRCRGHLRRIYYNLESNKCKVFFYGGCGGNANNFETRDECRQTC. Disulfide bonds link cysteine 31/cysteine 81, cysteine 40/cysteine 64, and cysteine 56/cysteine 77.

Belongs to the venom Kunitz-type family. In terms of tissue distribution, expressed by the venom gland.

It localises to the secreted. In terms of biological role, serine protease inhibitor that inhibits trypsin. The protein is Kunitz-type serine protease inhibitor B6 of Daboia siamensis (Eastern Russel's viper).